A 315-amino-acid polypeptide reads, in one-letter code: MRNQMKIALLVGLAIVCIGLFLFYDLGNWDYTLPRRIKKVAAIVLTGGAIAFSTMIFQTITNNRILTPSILGLDSLYMLIQTGIIFLFGSANMVIMNKNINFIISVLLMILFSLVLYQIMFKGEGRNIFFLLLIGIVFGTLFSSLSSFMQMLIDPNEFQVVQDKMFASFNNINTDLLWLAFIIFLLTGVYVWRFTKFFDVLSLGREHAVNLGIDYDKVVKQMLIVVAILVSVSTALVGPIMFLGLLVVNLAREFLKTYKHSYLIAGSVFISIIALVGGQFVVEKVFTFSTTLSVIINFAGGIYFIYLLLKENKSW.

Transmembrane regions (helical) follow at residues 7 to 27 (IALL…YDLG), 40 to 60 (VAAI…FQTI), 76 to 96 (LYML…MVIM), 100 to 120 (INFI…YQIM), 128 to 148 (IFFL…LSSF), 172 to 192 (INTD…VYVW), 223 to 243 (LIVV…IMFL), 262 to 282 (YLIA…QFVV), and 288 to 308 (FSTT…IYLL).

This sequence belongs to the binding-protein-dependent transport system permease family. FecCD subfamily. The complex is composed of two ATP-binding proteins (YclP), two transmembrane proteins (YclN and YclO) and a solute-binding protein (YclQ).

The protein resides in the cell membrane. In terms of biological role, part of the ABC transporter complex YclNOPQ involved in uptake of ferric-petrobactin. Petrobactin is a photoreactive 3,4-catecholate siderophore produced by many members of the B.cereus group, including B.anthracis. Probably responsible for the translocation of the substrate across the membrane. The sequence is that of Petrobactin import system permease protein YclO (yclO) from Bacillus subtilis (strain 168).